Reading from the N-terminus, the 705-residue chain is Calpastatin (705 aa).

Disordered stretches follow at residues 1–211 and 226–493; these read MNPT…PNDA and LTTC…PLPP. Composition is skewed to basic and acidic residues over residues 7–17 and 24–62; these read KAVKTEPEKKP and VVHEKKTQEVKPKEHTEPKSLPKHSSDTGVKHAPKEKAV. A Glycyl lysine isopeptide (Lys-Gly) (interchain with G-Cter in SUMO2) cross-link involves residue K10. At K28 the chain carries N6-acetyllysine. 2 stretches are compositionally biased toward low complexity: residues 63–72 and 94–103; these read SKSSEQPPSE and PAAAAAASAE. At S65 the chain carries Phosphoserine. The residue at position 115 (T115) is a Phosphothreonine. A compositionally biased stretch (acidic residues) spans 135 to 151; the sequence is TALDDLIDTLGEPEEMK. Residues 149–202 form an Inhibitory domain 1 repeat; it reads EMKEDNTTYTGPEVSDPMSSTYIEELGKRESTPPPKYKELLNKEEGIAGPPPDS. Positions 173-194 are enriched in basic and acidic residues; the sequence is ELGKRESTPPPKYKELLNKEEG. 2 positions are modified to phosphoserine: S202 and S230. A compositionally biased stretch (basic and acidic residues) spans 234-248; that stretch reads DGKETEKEKSTEEAL. The span at 275–286 shows a compositional bias: polar residues; sequence TEQALQALSASL. Basic and acidic residues-rich tracts occupy residues 289-317 and 327-352; these read RKPEPELDPSSIREVDEAKAKEEKVKKCG and YRLKPATDKDGKPLLPEAEEKPKPLS. An Inhibitory domain 2 repeat occupies 292–344; the sequence is EPELDPSSIREVDEAKAKEEKVKKCGEDEETVPSEYRLKPATDKDGKPLLPEA. Phosphoserine is present on residues S352, S354, and S361. The span at 355–364 shows a compositional bias: acidic residues; it reads ELIDELSEDF. Residues 365–381 show a composition bias toward basic and acidic residues; that stretch reads DQSKPTEKQSKPTEKTE. S428 carries the phosphoserine modification. Over residues 430 to 489 the composition is skewed to basic and acidic residues; that stretch reads PKKEADPEDGKPVEDKVKEKAKEEDRENFGEKEETIPPDYRLEEAKDKDGKPLLPKEVKE. An Inhibitory domain 3 repeat occupies 434–487; that stretch reads ADPEDGKPVEDKVKEKAKEEDRENFGEKEETIPPDYRLEEAKDKDGKPLLPKEV. 2 positions are modified to phosphoserine: S504 and S515. The disordered stretch occupies residues 527 to 705; sequence VSEVVSQTPA…KPKADGKSTS (179 aa). Residues 533-542 show a composition bias toward low complexity; that stretch reads QTPAPTTQAA. S563 is modified (phosphoserine). The stretch at 571-624 is one Inhibitory domain 4 repeat; it reads PDPDENKPVEDKVKEKAKAEHRDKLGERDDTIPPKYQHLLDDNKEGTPGKPKDQ. The span at 571–625 shows a compositional bias: basic and acidic residues; that stretch reads PDPDENKPVEDKVKEKAKAEHRDKLGERDDTIPPKYQHLLDDNKEGTPGKPKDQR. A compositionally biased stretch (low complexity) spans 651–662; that stretch reads DSCPSTTETSTD. Positions 683-705 are enriched in basic and acidic residues; it reads KAKDSTKAKEETSKPKADGKSTS.

It belongs to the protease inhibitor I27 (calpastatin) family.

Functionally, specific inhibition of calpain (calcium-dependent cysteine protease). Plays a key role in postmortem tenderization of meat and have been proposed to be involved in muscle protein degradation in living tissue. The chain is Calpastatin (CAST) from Bos taurus (Bovine).